The sequence spans 431 residues: Beclin-2 (431 aa).

The interval 17 to 74 (LSGSSESRSLPAAPAPTSGQAEPGDTREPGVTTREVTDAEEQQDGASSRSPPGDGSVS) is disordered. Positions 125 to 248 (LLEQLDIQLA…ARVQRDRLKE (124 aa)) form a coiled coil. The tract at residues 173–243 (EARLVQELED…NQLQYARVQR (71 aa)) is required for homodimer formation.

This sequence belongs to the beclin family. As to quaternary structure, homodimer (via coiled-coil domain). Interacts (via coiled-coil domain) with ATG14 (via coiled-coil domain); this interaction is tighter than BECN2 self-association. Interacts with AMBRA1, UVRAG and PIK3C3/VPS34; these interactions are not disrupted by starvation. Does not interact with RUBCN. Interacts (via N-terminus) with GPRASP1/GASP1; the interaction is direct. As to expression, present in fetal and adult brain (at protein level).

Its subcellular location is the cytoplasm. Its function is as follows. Involved in 2 distinct lysosomal degradation pathways: acts as a regulator of autophagy and as a regulator of G-protein coupled receptors turnover. Regulates degradation in lysosomes of a variety of G-protein coupled receptors via its interaction with GPRASP1/GASP1. In Homo sapiens (Human), this protein is Beclin-2.